The chain runs to 370 residues: Polygalacturonase 1 (370 aa).

Positions 1 to 18 (MRTSILSMLALGAAAVSA) are cleaved as a signal peptide. Cys-36 and Cys-51 are disulfide-bonded. PbH1 repeat units lie at residues 163-194 (ADNLVLDHITIDNTDGDKTNGGHNTDAFDVGE), 195-216 (STYITISNANIKNQDDCLAINS), 217-237 (GENIIFTGGTCSGGHGLSIGS), 246-267 (VKNVTISDSTVSNSDNGIRIKT), and 275-297 (VADVTFSNIELSNIAKYGIVIEQ). Asp-209 acts as the Proton donor in catalysis. A disulfide bond links Cys-211 and Cys-227. Residue His-231 is part of the active site. The N-linked (GlcNAc...) asparagine glycan is linked to Asn-248. 2 cysteine pairs are disulfide-bonded: Cys-337–Cys-342 and Cys-361–Cys-370.

Belongs to the glycosyl hydrolase 28 family.

It is found in the secreted. It catalyses the reaction (1,4-alpha-D-galacturonosyl)n+m + H2O = (1,4-alpha-D-galacturonosyl)n + (1,4-alpha-D-galacturonosyl)m.. In Penicillium olsonii, this protein is Polygalacturonase 1 (PG1).